A 319-amino-acid chain; its full sequence is HTH-type transcriptional regulator YidZ (319 aa).

The HTH lysR-type domain occupies 8–65 (LDLNLLLCLQLLMQERSVTKAAKRMNVTPSAVSKSLAKLRAWFDDPLFVNTPLGLAPT). The H-T-H motif DNA-binding region spans 25-44 (VTKAAKRMNVTPSAVSKSLA).

This sequence belongs to the LysR transcriptional regulatory family.

Its function is as follows. Involved in anaerobic NO protection. The protein is HTH-type transcriptional regulator YidZ of Salmonella heidelberg (strain SL476).